Consider the following 314-residue polypeptide: L-lactate dehydrogenase 2 (314 aa).

NAD(+) is bound by residues Val16, Asp37, Lys42, Tyr68, and Gly82–Val83. Positions 85 and 91 each coordinate substrate. NAD(+) is bound by residues Ser104, Ala121–Asn123, and Thr146. A substrate-binding site is contributed by Asn123–Asp126. Asp151–Arg154 is a substrate binding site. 2 residues coordinate beta-D-fructose 1,6-bisphosphate: Arg156 and His171. His178 functions as the Proton acceptor in the catalytic mechanism. Phosphotyrosine is present on Tyr223. Substrate is bound at residue Thr232.

It belongs to the LDH/MDH superfamily. LDH family. Homotetramer.

Its subcellular location is the cytoplasm. The enzyme catalyses (S)-lactate + NAD(+) = pyruvate + NADH + H(+). It functions in the pathway fermentation; pyruvate fermentation to lactate; (S)-lactate from pyruvate: step 1/1. Its activity is regulated as follows. Allosterically activated by fructose 1,6-bisphosphate (FBP). In terms of biological role, catalyzes the conversion of lactate to pyruvate. The polypeptide is L-lactate dehydrogenase 2 (Lactococcus lactis subsp. lactis (strain IL1403) (Streptococcus lactis)).